We begin with the raw amino-acid sequence, 264 residues long: MNQILLCSPILLLLFTVASCDSEQQLDSAMHLKSDSTKSASLKNVAPKNDETQAKIAKDDVALKDAKKGDYIMDIDISDLPLDDYPINRSKSLKSSSIDLNNIPFNKGLDDFPAKEKNQGSNQSALKALQQRLLTEQNNSLLLRNHSIYLMKEIEARKTDIIKVRQLNLDLELELNTVNRRLLELNGQLQNTRKSTKPCKKRSSKDSAPPAANQFQEANVRNTYRNKYLTLLKELSQKINNEIAKVATDVPTETNPSQGNLPTL.

An N-terminal signal peptide occupies residues 1 to 18 (MNQILLCSPILLLLFTVA). Residues 1–138 (MNQILLCSPI…LQQRLLTEQN (138 aa)) are sufficient for promoting ovulation when expressed in females. Asn-88, Asn-122, Asn-138, and Asn-145 each carry an N-linked (GlcNAc...) asparagine glycan. Residues 189 to 219 (LQNTRKSTKPCKKRSSKDSAPPAANQFQEAN) are disordered. Over residues 194–203 (KSTKPCKKRS) the composition is skewed to basic residues. Positions 219 to 264 (NVRNTYRNKYLTLLKELSQKINNEIAKVATDVPTETNPSQGNLPTL) are necessary and sufficient for homodimerization.

In terms of assembly, homodimer. As to quaternary structure, may form a homodimer. Post-translationally, glycosylation. Undergoes several cleavages as it is secreted and is further processed in the recipient female. The precursor molecule is proteolytically cleaved by the seminal metalloprotease Semp1 at Lys-48 to produce CP1-N and CP1-C. In terms of processing, cleaved at Lys-67 by Semp1 to generate CP2-N and CP2-C. Cleavage appears to take place in the mated female genital tract. Post-translationally, cleaved at Lys-117 by Semp1 to generate CP3-N and CP3-C. Cleavage appears to take place in the mated female genital tract. Produced in the male accessory glands and secreted into seminal fluid (at protein level). Detected in the main cells and secondary cells of the accessory glands of 1 day old males (at protein level). In 5 day old males, confined to the secondary cells and only reappears in the main cells after mating (at protein level). Produced in adult males 3-4 hr after eclosion, levels increase reaching a peak at day 3-5 which is maintained until at least day 10 of adulthood (at protein level). In unmated male adults, levels are maintained for the first 6 days of adulthood and then gradually decrease for at least the next 8 days. In mated females, detected in the genital tract 3 minutes after the start of mating (ASM) and is secreted into the female hemolymph via the posterior vaginal wall 5 minutes ASM (at protein level).

Its subcellular location is the secreted. The protein localises to the cytoplasm. Male seminal protein which enhances ovulation in female Drosophila by stimulating the release of oocytes by the ovary following mating. Acts by increasing octopamine (OA) neuronal signaling in the female genital tract leading to the postmating relaxation of the oviduct muscles. This activation of the OA signaling pathway is likely to indirectly contribute to the mating-dependent increase in the number of OA synaptic sites in the female reproductive tract. Functionally, male seminal peptide which is able to enhance ovulation in female Drosophila. This Drosophila melanogaster (Fruit fly) protein is Accessory gland-specific peptide 26Aa.